We begin with the raw amino-acid sequence, 31 residues long: Photosystem I reaction center subunit XII (31 aa).

Residues Gln-7–Gly-26 traverse the membrane as a helical segment.

Belongs to the PsaM family.

It is found in the plastid. It localises to the chloroplast thylakoid membrane. The polypeptide is Photosystem I reaction center subunit XII (Euglena deses).